The sequence spans 284 residues: UPF0276 protein PA3283 (284 aa).

Belongs to the UPF0276 family.

The polypeptide is UPF0276 protein PA3283 (Pseudomonas aeruginosa (strain ATCC 15692 / DSM 22644 / CIP 104116 / JCM 14847 / LMG 12228 / 1C / PRS 101 / PAO1)).